A 134-amino-acid polypeptide reads, in one-letter code: Thrombin inhibitor savignin (134 aa).

The signal sequence occupies residues 1-16 (MLFYVVITLVAGTVSG). The BPTI/Kunitz inhibitor 1 domain maps to 17–69 (LNVRCNNPHTANCENGAKLESYFREGETCVGSPACPGEGYATKEDCQKACFPG). 6 disulfides stabilise this stretch: Cys-21–Cys-66, Cys-29–Cys-51, Cys-45–Cys-62, Cys-81–Cys-129, Cys-89–Cys-112, and Cys-105–Cys-125. Positions 70–82 (GGDHSTNVDSSCF) are linker. Positions 83–129 (GQPPTSCETGAEVTYYDSGSRTCKVLQHGCPSSENAFDSEIECQVAC) constitute a BPTI/Kunitz inhibitor domain.

In terms of tissue distribution, expressed in salivary glands.

Its subcellular location is the cytoplasmic vesicle. The protein resides in the secretory vesicle. It localises to the secreted. In terms of biological role, tick salivary thrombin inhibitor that plays an important part in the anti-hemostatic strategy of ticks. Inhibits thrombin-induced platelet aggregation, but has no effect on ADP- or collagen-induced aggregation. Is a competitive, slow-, tight-binding inhibitor of thrombin (Ki=4.89 pM). It requires thrombin fibrinogen-binding exosite for optimal inhibition, as its affinity for thrombin lacking the exosite is much lower (Ki=22.3 nM). Its N-terminal amino acid residues may bind inside the active site cleft of thrombin, while its C-terminal domain may interact with the basic fibrinogen recognition exosite of thrombin. It does not inhibit plasmin, factor Xa (F10), and trypsin. The protein is Thrombin inhibitor savignin of Ornithodoros kalahariensis (Tick).